We begin with the raw amino-acid sequence, 110 residues long: Large ribosomal subunit protein uL22 (110 aa).

It belongs to the universal ribosomal protein uL22 family. In terms of assembly, part of the 50S ribosomal subunit.

In terms of biological role, this protein binds specifically to 23S rRNA; its binding is stimulated by other ribosomal proteins, e.g. L4, L17, and L20. It is important during the early stages of 50S assembly. It makes multiple contacts with different domains of the 23S rRNA in the assembled 50S subunit and ribosome. The globular domain of the protein is located near the polypeptide exit tunnel on the outside of the subunit, while an extended beta-hairpin is found that lines the wall of the exit tunnel in the center of the 70S ribosome. This Aliivibrio fischeri (strain MJ11) (Vibrio fischeri) protein is Large ribosomal subunit protein uL22.